The following is a 604-amino-acid chain: NRPS-independent siderophore synthetase-like protein ankE (604 aa).

The catalysed reaction is cyclo(L-arginyl-(Z)-dehydro-4-O-homoseryl-tyrosyl) + citrate + ATP = NK13650 B + AMP + diphosphate + H(+). It participates in secondary metabolite biosynthesis. In terms of biological role, NRPS-independent siderophore synthetase-like protein; part of the ank cluster that mediates the biosynthesis of NK13650 C, a highly modified cyclo-arginine-tyrosine dipeptide. AnkE is responsible of the production of NK13650 B via ligation of citrate to the ankD product. Within the pathway, the cyclodipeptide synthase ankA acts as the scaffold-generating enzyme and is responsible for formation of the cyclo-Arg-Tyr diketopiperazine (cRY) from L-Arg and L-Tyr. The ankA product cRY is desaturated by the cytochrome P450 monooxygenase ankB to yield a dehydro-cyclodipeptide intermediate. The FAD-dependent monooxygenase ankC then installs the m-OH, ankD catalyzes the attachment of L-homoserine, and ankE ligates citrate to the ankD product to yield NK13650 B. The O-methyltransferase ankF is responsible for methylation of the C-17 phenol group of NK13650 B to produce NK13650 D. Amidation of NK13650 D with L-Asp by ankG then leads to the production of NK13650 C, whereas amidation of NK13650 B produces NK13650 A. In Aspergillus thermomutatus (Neosartorya pseudofischeri), this protein is NRPS-independent siderophore synthetase-like protein ankE.